The primary structure comprises 148 residues: Ubiquitin-conjugating enzyme E2-17 kDa (148 aa).

In terms of domain architecture, UBC core spans M1–M147. The Glycyl thioester intermediate role is filled by C85.

This sequence belongs to the ubiquitin-conjugating enzyme family.

It catalyses the reaction S-ubiquitinyl-[E1 ubiquitin-activating enzyme]-L-cysteine + [E2 ubiquitin-conjugating enzyme]-L-cysteine = [E1 ubiquitin-activating enzyme]-L-cysteine + S-ubiquitinyl-[E2 ubiquitin-conjugating enzyme]-L-cysteine.. Its pathway is protein modification; protein ubiquitination. In terms of biological role, catalyzes the covalent attachment of ubiquitin to other proteins. Mediates the selective degradation of short-lived and abnormal proteins. The protein is Ubiquitin-conjugating enzyme E2-17 kDa of Solanum lycopersicum (Tomato).